Consider the following 1023-residue polypeptide: Sodium/potassium-transporting ATPase subunit alpha-1 (1023 aa).

The propeptide occupies 1 to 5; it reads MAFKV. A compositionally biased stretch (basic and acidic residues) spans 1–11; that stretch reads MAFKVGRDKYE. The disordered stretch occupies residues 1–38; the sequence is MAFKVGRDKYEPAAVSEQGDKKGKKGKKDRDMDELKKE. The Cytoplasmic portion of the chain corresponds to 6 to 87; the sequence is GRDKYEPAAV…NALTPPPTTP (82 aa). Residue Lys-9 is modified to N6-acetyllysine. A Phosphotyrosine modification is found at Tyr-10. Ser-16 carries the phosphoserine; by PKC modification. Lys-21 carries the post-translational modification N6-acetyllysine. Over residues 28–38 the composition is skewed to basic and acidic residues; the sequence is KDRDMDELKKE. 2 positions are modified to phosphoserine: Ser-40 and Ser-47. Positions 82-84 are phosphoinositide-3 kinase binding; it reads PPP. Residues 88-108 form a helical membrane-spanning segment; the sequence is EWIKFCRQLFGGFSMLLWIGA. The Extracellular portion of the chain corresponds to 109-131; that stretch reads ILCFLAYSIQAATEEEPQNDNLY. The helical transmembrane segment at 132 to 152 threads the bilayer; sequence LGVVLSAVVIITGCFSYYQEA. The Cytoplasmic segment spans residues 153-288; that stretch reads KSSKIMESFK…GGQTPIAAEI (136 aa). A disordered region spans residues 216–235; sequence SSLTGESEPQTRSPDFTNEN. Ser-228 is modified (phosphoserine). The residue at position 260 (Tyr-260) is a Phosphotyrosine. Residues 289–308 form a helical membrane-spanning segment; sequence EHFIHIITGVAVFLGVSFFI. The Extracellular segment spans residues 309 to 320; that stretch reads LSLILEYTWLEA. A helical membrane pass occupies residues 321–338; the sequence is VIFLIGIIVANVPEGLLA. Over 339 to 772 the chain is Cytoplasmic; that stretch reads TVTVCLTLTA…EEGRLIFDNL (434 aa). The 4-aspartylphosphate intermediate role is filled by Asp-376. Phosphoserine occurs at positions 452 and 484. ATP is bound at residue Lys-487. Position 542 is a phosphotyrosine (Tyr-542). The tract at residues 596–717 is mediates interaction with SCN7A; it reads RAAVPDAVGK…QGAIVAVTGD (122 aa). N6-succinyllysine is present on Lys-661. Residues Ser-668 and Ser-675 each carry the phosphoserine modification. The Mg(2+) site is built by Asp-717 and Asp-721. A helical transmembrane segment spans residues 773-792; that stretch reads KKSIAYTLTSNIPEITPFLI. The Extracellular portion of the chain corresponds to 793–802; the sequence is FIIANIPLPL. Residues 803–823 form a helical membrane-spanning segment; that stretch reads GTVTILCIDLGTDMVPAISLA. At 824-843 the chain is on the cytoplasmic side; it reads YEQAESDIMKRQPRNPKTDK. A helical membrane pass occupies residues 844–866; the sequence is LVNERLISTAYGQIGMIQALGGF. Residues 867 to 918 lie on the Extracellular side of the membrane; the sequence is FTYFVILAENGFLPLHLLGLRVDWDDRWINDVEDSYGQQWTYEQRKIVEFTC. A helical transmembrane segment spans residues 919 to 938; it reads HTAFFVSIVVVQWADLVICK. Over 939 to 951 the chain is Cytoplasmic; sequence TRRNSVFQQGMKN. Residue Ser-943 is modified to Phosphoserine; by PKA. Residues 952–970 traverse the membrane as a helical segment; sequence KILIFGLFEETALAAFLSY. At 971–985 the chain is on the extracellular side; sequence CPGMGVALRMYPLKP. A helical membrane pass occupies residues 986-1006; the sequence is TWWFCAFPYSLLIFVYDEVRK. Over 1007-1023 the chain is Cytoplasmic; it reads LIIRRRPGGWVEKETYY.

It belongs to the cation transport ATPase (P-type) (TC 3.A.3) family. Type IIC subfamily. The sodium/potassium-transporting ATPase is composed of a catalytic alpha subunit, an auxiliary non-catalytic beta subunit and an additional regulatory subunit. Interacts with regulatory subunit FXYD1. Interacts with regulatory subunit FXYD3. Interacts with SIK1. Interacts with SLC35G1 and STIM1. Interacts with CLN3; this interaction regulates the sodium/potassium-transporting ATPase complex localization at the plasma membrane. Interacts with SCN7A; activates ATP1A1 P-type sodium:potassium-exchanging transporter activity which indirectly signals to nearby neurons to regulate sodium homeostasis. In terms of processing, phosphorylation on Tyr-10 modulates pumping activity. Phosphorylation of Ser-943 by PKA modulates the response of ATP1A1 to PKC. Dephosphorylation by protein phosphatase 2A (PP2A) following increases in intracellular sodium, leading to increase catalytic activity.

It is found in the cell membrane. The protein localises to the basolateral cell membrane. The protein resides in the sarcolemma. It localises to the cell projection. Its subcellular location is the axon. It is found in the melanosome. The catalysed reaction is K(+)(out) + Na(+)(in) + ATP + H2O = K(+)(in) + Na(+)(out) + ADP + phosphate + H(+). In terms of biological role, this is the catalytic component of the active enzyme, which catalyzes the hydrolysis of ATP coupled with the exchange of sodium and potassium ions across the plasma membrane. This action creates the electrochemical gradient of sodium and potassium ions, providing the energy for active transport of various nutrients. Could also be part of an osmosensory signaling pathway that senses body-fluid sodium levels and controls salt intake behavior as well as voluntary water intake to regulate sodium homeostasis. This Pongo abelii (Sumatran orangutan) protein is Sodium/potassium-transporting ATPase subunit alpha-1 (ATP1A1).